A 91-amino-acid polypeptide reads, in one-letter code: Acylphosphatase (91 aa).

One can recognise an Acylphosphatase-like domain in the interval glutamine 3–tyrosine 90. Active-site residues include arginine 18 and asparagine 36.

Belongs to the acylphosphatase family.

It carries out the reaction an acyl phosphate + H2O = a carboxylate + phosphate + H(+). This Bacillus subtilis (strain 168) protein is Acylphosphatase (acyP).